The primary structure comprises 679 residues: Altered inheritance of mitochondria protein 21 (679 aa).

A disordered region spans residues 1-95 (MPSEVTPKVP…EELNNVMNNT (95 aa)). The segment covering 9 to 19 (VPERPSRRKTS) has biased composition (basic and acidic residues). The residue at position 18 (T18) is a Phosphothreonine. Residue S36 is modified to Phosphoserine. Phosphothreonine is present on T58. S70 is subject to Phosphoserine. Phosphothreonine is present on T85. A compositionally biased stretch (polar residues) spans 86 to 95 (EELNNVMNNT). Position 104 is a phosphoserine (S104). Disordered stretches follow at residues 107-522 (SKHN…EKIE) and 548-679 (LMDT…FHSL). Positions 109–119 (HNIHSVSRKKS) are enriched in basic residues. Composition is skewed to polar residues over residues 133–149 (QNGQRSASDNKTSTNPS) and 164–178 (SAISPSNSVNKSNNE). The segment covering 179–213 (VTEHSDSEDLTEKQKVHAALDNEAGDGSHFEEKLI) has biased composition (basic and acidic residues). 3 positions are modified to phosphoserine: S183, S206, and S231. The span at 243–272 (SDDKAEKFTKHPESSLEELQKHQEQQEEKI) shows a compositional bias: basic and acidic residues. T277 bears the Phosphothreonine mark. Residue S284 is modified to Phosphoserine. Residues 296–323 (EVNSQPQGPSDTETVIAATSSNVPSQIA) are compositionally biased toward polar residues. Phosphoserine is present on S324. Composition is skewed to basic and acidic residues over residues 339-351 (KKDFEAHVQKEEL) and 372-383 (EESKIPKIPSER). The interaction with SH3 domain of ABP1 stretch occupies residues 383–396 (RPKRRAPPPVPKKP). Composition is skewed to polar residues over residues 414 to 427 (DLHNNGNSSATTAS) and 437 to 452 (SSITSDTTKADFTSKL). A compositionally biased stretch (basic and acidic residues) spans 471-482 (LEKKLSSPDTES). Positions 483–492 (KLGTQDQSQA) are enriched in polar residues. Basic residues predominate over residues 501-512 (RRGRGPRGRKLP). T552 is modified (phosphothreonine). Positions 556-576 (QAERALDEKSKSIPEEQREQS) are enriched in basic and acidic residues. S576 carries the phosphoserine modification. The segment covering 603-613 (PLSQLPQTNAV) has biased composition (polar residues). A phosphoserine mark is found at S620, S623, S625, S627, S667, S671, S675, and S678. Residues 667–679 (SALHSEEASFHSL) are compositionally biased toward basic and acidic residues.

The protein belongs to the AIM21 family. In terms of assembly, interacts with ribosomes. Interacts with ABP1.

The protein localises to the cytoplasm. The protein resides in the cytoskeleton. It localises to the actin patch. Involved in mitochondrial migration along actin filaments. This is Altered inheritance of mitochondria protein 21 (AIM21) from Saccharomyces cerevisiae (strain YJM789) (Baker's yeast).